Reading from the N-terminus, the 605-residue chain is E3 ubiquitin-protein ligase synoviolin A (605 aa).

The chain crosses the membrane as a helical span at residues 1–19 (MTGASLALTAAVVAHAYYL). Topologically, residues 20-35 (KNQFYPTVVYLTKSSP) are lumenal. A helical membrane pass occupies residues 36–56 (SMAVLYIQAFVLVFLLGKFMG). The Cytoplasmic portion of the chain corresponds to 57–92 (KVFFGQLRAAEMEHLLERSWYAVTETCLAFTVFRDD). A helical transmembrane segment spans residues 93 to 113 (FSPRFVALFTLLLFLKCFHWL). The Lumenal segment spans residues 114–129 (AEDRVDFMERSPNISW). Residues 130–150 (LFHFRILALMLLLGVLDAFFV) traverse the membrane as a helical segment. Residues 151-163 (SHAYHSLVIRGAS) are Cytoplasmic-facing. Residues 164–184 (VQLVFGFEYAILMTVILTVFI) form a helical membrane-spanning segment. Residues 185–218 (KYILHSVDLQSENPWDNKAVYMLYTELFTGFIKV) are Lumenal-facing. A helical membrane pass occupies residues 219 to 239 (LLYVAFMTIMVKVHTFPLFAI). The interaction with p53/TP53 stretch occupies residues 230-264 (KVHTFPLFAIRPMYLAMRQFKKAVTDAIMSRRAIR). Residues 240–605 (RPMYLAMRQF…KLETGTTDSQ (366 aa)) lie on the Cytoplasmic side of the membrane. Residues Cys-285, Cys-288, Cys-301, His-303, His-306, Cys-309, Cys-320, and Cys-323 each coordinate Zn(2+). The segment at 285–324 (CIICREEMVTGAKRLPCNHIFHTSCLRSWFQRQQTCPTCR) adopts an RING-type; atypical zinc-finger fold. Over residues 334 to 355 (TQPQTPTEQQNQHQNQAQQQPT) the composition is skewed to low complexity. A disordered region spans residues 334–433 (TQPQTPTEQQ…QPGAALPGFP (100 aa)). A compositionally biased stretch (pro residues) spans 356–391 (PVIPPQPNFPPGILPPFPPGMFPLWPPMGPFPPVPG). The span at 403–414 (PGSSSGSSPRPG) shows a compositional bias: low complexity. The segment covering 415–424 (ETSNVGSESQ) has biased composition (polar residues). Residues 465–496 (EELRAMEGHERQNLEARLQCLQNIHTLLDAAM) adopt a coiled-coil conformation. The tract at residues 513 to 605 (QPPISSTSTS…KLETGTTDSQ (93 aa)) is disordered. Residues 516–539 (ISSTSTSTSSAASASTAPTTSNIS) show a composition bias toward low complexity. The span at 546-555 (DTTSTVTNTE) shows a compositional bias: polar residues. Residues 556–579 (SSQQSAPPAPVSVETLSGAEGGET) are compositionally biased toward low complexity.

It belongs to the HRD1 family. Homodimer.

It localises to the endoplasmic reticulum membrane. The catalysed reaction is S-ubiquitinyl-[E2 ubiquitin-conjugating enzyme]-L-cysteine + [acceptor protein]-L-lysine = [E2 ubiquitin-conjugating enzyme]-L-cysteine + N(6)-ubiquitinyl-[acceptor protein]-L-lysine.. It participates in protein modification; protein ubiquitination. Functionally, E3 ubiquitin-protein ligase which accepts ubiquitin specifically from endoplasmic reticulum-associated UBC7 E2 ligase and transfers it to substrates, promoting their degradation. Component of the endoplasmic reticulum quality control (ERQC) system also called ER-associated degradation (ERAD) involved in ubiquitin-dependent degradation of misfolded endoplasmic reticulum proteins. Also promotes the degradation of normal but naturally short-lived proteins. Protects cells from ER stress-induced apoptosis. Sequesters p53 in the cytoplasm and promotes its degradation, thereby negatively regulating its biological function in transcription, cell cycle regulation and apoptosis. This chain is E3 ubiquitin-protein ligase synoviolin A (syvn1-a), found in Xenopus laevis (African clawed frog).